A 588-amino-acid polypeptide reads, in one-letter code: Myc box-dependent-interacting protein 1 (588 aa).

Alanine 2 is modified (N-acetylalanine). Residues 2–122 form an interaction with BIN2 region; that stretch reads AEMGSKGVTA…DYHQKLVDQA (121 aa). 2 coiled-coil regions span residues 15–42 and 193–274; these read ASNVQKKLTRAQEKVLQKLGKADETKDE and HLVA…EKQH. One can recognise a BAR domain in the interval 29–276; it reads VLQKLGKADE…LVSLEKQHGS (248 aa). A disordered region spans residues 279 to 355; the sequence is FTVKAQPSDS…PKHTPSKEMK (77 aa). Phosphoserine occurs at positions 296, 298, and 304. Threonine 308 is modified (phosphothreonine). Residues serine 324 and serine 332 each carry the phosphoserine modification. The clathrin-binding stretch occupies residues 379–422; sequence FEAPGPFSEQASLLDLDFEPLPPVASPVKAPTPSGQSIPWDLWE. The interval 448-483 is disordered; that stretch reads PSQTAEPGPAQPAEASEVVGGTQEPGETAASEATSS. Positions 474–483 are enriched in low complexity; that stretch reads ETAASEATSS. Residues 515–588 form the SH3 domain; it reads GFMFKVQAQH…FPENFTERVQ (74 aa).

In terms of assembly, heterodimer with AMPH. Binds SH3GLB1. Interacts (via SH3 domain) with DNM1. Interacts with SYNJ1. Interacts (via SH3 domain) with DNM2. Interacts with CLTC. Interacts with AP2A2. Interacts with AP2B1. Interacts with MYC (via N-terminal transactivation domain); the interaction requires the integrity of the conserved MYC box regions 1 and 2. Interacts with BIN2. Interacts with SNX4. Interacts (via BAR domain) with BACE1. Binds (via BAR domain) F-actin. Post-translationally, phosphorylated by protein kinase C. Highly expressed in the brain and muscle. Isoform AMPH2-1 is expressed only in the brain where it is concentrated in axon initial segments and nodes of Ranvier. Isoform AMPH2-2 is widely expressed.

It is found in the nucleus. It localises to the cytoplasm. The protein resides in the endosome. The protein localises to the cell membrane. Its subcellular location is the sarcolemma. It is found in the T-tubule. Is a key player in the control of plasma membrane curvature, and membrane shaping and remodeling. Required in muscle cells for the formation of T-tubules, tubular invaginations of the plasma membrane that function in depolarization-contraction coupling. Required in muscle cells for the formation of T-tubules, tubular invaginations of the plasma membrane that function in depolarization-contraction coupling. Is a negative regulator of endocytosis. Is also involved in the regulation of intracellular vesicles sorting, modulation of BACE1 trafficking and the control of amyloid-beta production. In neuronal circuits, endocytosis regulation may influence the internalization of PHF-tau aggregates. May be involved in the regulation of MYC activity and the control cell proliferation. This chain is Myc box-dependent-interacting protein 1 (Bin1), found in Rattus norvegicus (Rat).